Here is a 586-residue protein sequence, read N- to C-terminus: Arrestin-related trafficking adapter 5 (586 aa).

Disordered stretches follow at residues 123 to 145 and 182 to 217; these read GENAENQHNSSSGRSTSNQDMDT and ENGVTGTPFEGLRENARSRSSSSNTLNNNSHSYSNR. The span at 126-145 shows a compositional bias: polar residues; the sequence is AENQHNSSSGRSTSNQDMDT. Positions 199–216 are enriched in low complexity; it reads SRSSSSNTLNNNSHSYSN. A Glycyl lysine isopeptide (Lys-Gly) (interchain with G-Cter in ubiquitin) cross-link involves residue Lys-364.

This sequence belongs to the arrestin family. Interacts with RSP5. In terms of processing, ubiquitinated by RSP5.

Functionally, may regulate endocytosis by recruiting RSP5 ubiquitin ligase activity to specific plasma membrane proteins in response to extracellular stimuli. The protein is Arrestin-related trafficking adapter 5 (ART5) of Saccharomyces cerevisiae (strain ATCC 204508 / S288c) (Baker's yeast).